A 307-amino-acid chain; its full sequence is Aspartate carbamoyltransferase catalytic subunit (307 aa).

Arginine 56 and threonine 57 together coordinate carbamoyl phosphate. Lysine 84 serves as a coordination point for L-aspartate. The carbamoyl phosphate site is built by arginine 106, histidine 136, and glutamine 139. Residues arginine 169 and arginine 221 each coordinate L-aspartate. Alanine 262 and proline 263 together coordinate carbamoyl phosphate.

Belongs to the aspartate/ornithine carbamoyltransferase superfamily. ATCase family. As to quaternary structure, heterododecamer (2C3:3R2) of six catalytic PyrB chains organized as two trimers (C3), and six regulatory PyrI chains organized as three dimers (R2).

It carries out the reaction carbamoyl phosphate + L-aspartate = N-carbamoyl-L-aspartate + phosphate + H(+). Its pathway is pyrimidine metabolism; UMP biosynthesis via de novo pathway; (S)-dihydroorotate from bicarbonate: step 2/3. Its function is as follows. Catalyzes the condensation of carbamoyl phosphate and aspartate to form carbamoyl aspartate and inorganic phosphate, the committed step in the de novo pyrimidine nucleotide biosynthesis pathway. The sequence is that of Aspartate carbamoyltransferase catalytic subunit from Streptococcus pneumoniae (strain 70585).